The following is a 35-amino-acid chain: RWKVFKKIEKVGRNIRDGVIKAAPAIEVLGQAKAL.

Position 35 is a leucine amide (L35).

Monomer. In terms of tissue distribution, hemolymph.

The protein resides in the secreted. Functionally, cecropins have lytic and antibacterial activity against several Gram-positive and Gram-negative bacteria. Also has activity against fungi. This chain is Cecropin-A, found in Heliothis virescens (Tobacco budworm moth).